Here is a 91-residue protein sequence, read N- to C-terminus: DNA-directed RNA polymerase subunit omega (91 aa).

It belongs to the RNA polymerase subunit omega family. The RNAP catalytic core consists of 2 alpha, 1 beta, 1 beta' and 1 omega subunit. When a sigma factor is associated with the core the holoenzyme is formed, which can initiate transcription.

The enzyme catalyses RNA(n) + a ribonucleoside 5'-triphosphate = RNA(n+1) + diphosphate. Functionally, promotes RNA polymerase assembly. Latches the N- and C-terminal regions of the beta' subunit thereby facilitating its interaction with the beta and alpha subunits. The chain is DNA-directed RNA polymerase subunit omega from Pectobacterium carotovorum subsp. carotovorum (strain PC1).